Consider the following 655-residue polypeptide: Protein nipi-3 (655 aa).

Residues 1 to 35 (MARTKCKTKTVANPRTGVRKTAKDLSEPVRQDAVS) are disordered. A compositionally biased stretch (basic and acidic residues) spans 21–35 (TAKDLSEPVRQDAVS). Residues 200 to 470 (IGIFVIYGTG…NQVNGDFPEI (271 aa)) form the Protein kinase domain. Residues 206–214 (YGTGLVTRA) and K235 each bind ATP.

The protein belongs to the protein kinase superfamily. CAMK Ser/Thr protein kinase family. As to quaternary structure, may interact with transcription factor cebp-1 (via N-terminus). As to expression, expressed in epidermis, pharynx, intestine, a subset of head neurons and motoneurons.

It is found in the nucleus. Its function is as follows. Adapter protein that regulates different signaling pathways. Required for larval development and viability. Involved in negatively modulating pmk-1 p38/MAPK signaling. Involved in innate immunity, acting either in a manner dependent upon, or independent of, the pmk-1 or pmk-3 p38/MAPK pathways. Has a protective role in response to infection by the Gram-negative bacterium P.aeruginosa, acting by negatively modulating expression of cebp-1, and regulating the pmk-1 p38/MAPK pathway, leading to activation of transcription factor skn-1. Required to prevent P.aeruginosa toxin ToxA-mediated lethality, probably acting via modulating the effects of translational inhibition caused by the toxin. By regulating the up-regulation in the epidermis of antimicrobial peptides nlp-29 and nlp-31, plays a role in resistance to fungal infection. This is Protein nipi-3 from Caenorhabditis elegans.